The chain runs to 472 residues: Siroheme synthase (472 aa).

The tract at residues 1-203 (MNYLPIFIDI…GKIQEAKADL (203 aa)) is precorrin-2 dehydrogenase /sirohydrochlorin ferrochelatase. Residues 22–23 (DI) and 43–44 (KS) each bind NAD(+). Phosphoserine is present on serine 128. Residues 216-472 (GEVYLVGGGP…SSKKSYLFGG (257 aa)) form a uroporphyrinogen-III C-methyltransferase region. Proline 225 contributes to the S-adenosyl-L-methionine binding site. Aspartate 248 (proton acceptor) is an active-site residue. Catalysis depends on lysine 270, which acts as the Proton donor. Residues 301–303 (GGD), isoleucine 306, 331–332 (TA), methionine 383, and glycine 412 contribute to the S-adenosyl-L-methionine site.

In the N-terminal section; belongs to the precorrin-2 dehydrogenase / sirohydrochlorin ferrochelatase family. The protein in the C-terminal section; belongs to the precorrin methyltransferase family.

It carries out the reaction uroporphyrinogen III + 2 S-adenosyl-L-methionine = precorrin-2 + 2 S-adenosyl-L-homocysteine + H(+). The catalysed reaction is precorrin-2 + NAD(+) = sirohydrochlorin + NADH + 2 H(+). The enzyme catalyses siroheme + 2 H(+) = sirohydrochlorin + Fe(2+). The protein operates within cofactor biosynthesis; adenosylcobalamin biosynthesis; precorrin-2 from uroporphyrinogen III: step 1/1. It functions in the pathway cofactor biosynthesis; adenosylcobalamin biosynthesis; sirohydrochlorin from precorrin-2: step 1/1. Its pathway is porphyrin-containing compound metabolism; siroheme biosynthesis; precorrin-2 from uroporphyrinogen III: step 1/1. It participates in porphyrin-containing compound metabolism; siroheme biosynthesis; siroheme from sirohydrochlorin: step 1/1. The protein operates within porphyrin-containing compound metabolism; siroheme biosynthesis; sirohydrochlorin from precorrin-2: step 1/1. Multifunctional enzyme that catalyzes the SAM-dependent methylations of uroporphyrinogen III at position C-2 and C-7 to form precorrin-2 via precorrin-1. Then it catalyzes the NAD-dependent ring dehydrogenation of precorrin-2 to yield sirohydrochlorin. Finally, it catalyzes the ferrochelation of sirohydrochlorin to yield siroheme. This Ruthia magnifica subsp. Calyptogena magnifica protein is Siroheme synthase.